A 227-amino-acid polypeptide reads, in one-letter code: MIKKVKIKKFNGRDFYDMEDYVAVEESYNIFINGEFVKSLSMSPNFLNEFAVGFAISEGFLNKIDKVEVDKNNINIFGEKNDREIKNNKNNKEIKIDIEIIKKIISYEIKAKYWEITGSFHWASMFDLKGNSIIFVEDIGRHNAVDKVIGYAILNNYNLNKLILRYSGRIPSDIVKKAINSGLNIIISKSPPTDKAIELAEENNILLIGFARNGKFNIYTSGRLWEE.

Position 210–215 (210–215 (FARNGK)) interacts with Mo-bis(molybdopterin guanine dinucleotide).

Belongs to the FdhD family.

It is found in the cytoplasm. In terms of biological role, required for formate dehydrogenase (FDH) activity. This Methanocaldococcus jannaschii (strain ATCC 43067 / DSM 2661 / JAL-1 / JCM 10045 / NBRC 100440) (Methanococcus jannaschii) protein is Protein FdhD.